A 326-amino-acid polypeptide reads, in one-letter code: Balbiani ring protein 1 (326 aa).

Residues 1 to 33 (PSKSGPRPSKSGPRPSKSGPRPSKSGPRPSKSG) show a composition bias toward low complexity. The disordered stretch occupies residues 1-119 (PSKSGPRPSK…RESPVCDDAM (119 aa)). A compositionally biased stretch (basic and acidic residues) spans 34-51 (PRPEKCGSAMRKAEAEKC). Over residues 93 to 102 (VTPTPEVPTT) the composition is skewed to low complexity. Basic and acidic residues predominate over residues 107-119 (SESRESPVCDDAM).

In terms of tissue distribution, salivary gland.

It is found in the secreted. Used by the larvae to construct a supramolecular structure, the larval tube. The protein is Balbiani ring protein 1 (BR1) of Chironomus pallidivittatus (Midge).